Reading from the N-terminus, the 649-residue chain is UvrABC system protein C (649 aa).

Residues 12-91 (SSPGVYLMKS…IKQHRPKYNI (80 aa)) form the GIY-YIG domain. Residues 201–236 (NEVARLYRSKMNLASEQMRYEDAARYRDLLRAIEVT) form the UVR domain. Positions 603-649 (RLHGGPLPNPPPPGEGAMGDGSIPSPRNGVMDDSIPSPSGRGWPKAG) are disordered.

The protein belongs to the UvrC family. Interacts with UvrB in an incision complex.

It localises to the cytoplasm. In terms of biological role, the UvrABC repair system catalyzes the recognition and processing of DNA lesions. UvrC both incises the 5' and 3' sides of the lesion. The N-terminal half is responsible for the 3' incision and the C-terminal half is responsible for the 5' incision. This chain is UvrABC system protein C, found in Geobacter sp. (strain M21).